A 67-amino-acid chain; its full sequence is Beta-defensin 36 (67 aa).

The first 22 residues, 1 to 22, serve as a signal peptide directing secretion; that stretch reads MKLLLLTLAALLLVSQLTPGDA. 3 disulfides stabilise this stretch: Cys-25–Cys-52, Cys-32–Cys-46, and Cys-36–Cys-53.

This sequence belongs to the beta-defensin family.

The protein localises to the secreted. Its function is as follows. Has antibacterial activity. This Mus musculus (Mouse) protein is Beta-defensin 36 (Defb36).